Here is a 304-residue protein sequence, read N- to C-terminus: Glutaminase (304 aa).

The substrate site is built by Ser63, Asn113, Glu157, Asn164, Tyr188, Tyr240, and Val258.

It belongs to the glutaminase family. Homotetramer.

It carries out the reaction L-glutamine + H2O = L-glutamate + NH4(+). This chain is Glutaminase, found in Ralstonia nicotianae (strain ATCC BAA-1114 / GMI1000) (Ralstonia solanacearum).